Here is a 152-residue protein sequence, read N- to C-terminus: UPF0266 membrane protein YobD (152 aa).

The next 3 helical transmembrane spans lie at 6–26 (LVLI…QFIM), 45–65 (VDSV…VTSH), and 67–87 (AQMT…IFWI).

Belongs to the UPF0266 family.

Its subcellular location is the cell inner membrane. In Salmonella dublin (strain CT_02021853), this protein is UPF0266 membrane protein YobD.